The sequence spans 2293 residues: Protein Ycf2 (2293 aa).

1647–1654 (GSIGTGRS) provides a ligand contact to ATP.

It belongs to the Ycf2 family.

It is found in the plastid. The protein resides in the chloroplast stroma. In terms of biological role, probable ATPase of unknown function. Its presence in a non-photosynthetic plant (Epifagus virginiana) and experiments in tobacco indicate that it has an essential function which is probably not related to photosynthesis. This is Protein Ycf2 from Lobularia maritima (Sweet alyssum).